The following is a 281-amino-acid chain: 4-hydroxy-3-methylbut-2-enyl diphosphate reductase (281 aa).

Cysteine 12 lines the [4Fe-4S] cluster pocket. 2 residues coordinate (2E)-4-hydroxy-3-methylbut-2-enyl diphosphate: histidine 41 and histidine 74. Dimethylallyl diphosphate-binding residues include histidine 41 and histidine 74. 2 residues coordinate isopentenyl diphosphate: histidine 41 and histidine 74. Cysteine 96 contributes to the [4Fe-4S] cluster binding site. Residue histidine 124 participates in (2E)-4-hydroxy-3-methylbut-2-enyl diphosphate binding. Dimethylallyl diphosphate is bound at residue histidine 124. Residue histidine 124 participates in isopentenyl diphosphate binding. The Proton donor role is filled by glutamate 126. Threonine 164 contacts (2E)-4-hydroxy-3-methylbut-2-enyl diphosphate. [4Fe-4S] cluster is bound at residue cysteine 193. 3 residues coordinate (2E)-4-hydroxy-3-methylbut-2-enyl diphosphate: serine 221, asparagine 223, and serine 265. Positions 221, 223, and 265 each coordinate dimethylallyl diphosphate. Isopentenyl diphosphate is bound by residues serine 221, asparagine 223, and serine 265.

This sequence belongs to the IspH family. [4Fe-4S] cluster serves as cofactor.

The enzyme catalyses isopentenyl diphosphate + 2 oxidized [2Fe-2S]-[ferredoxin] + H2O = (2E)-4-hydroxy-3-methylbut-2-enyl diphosphate + 2 reduced [2Fe-2S]-[ferredoxin] + 2 H(+). It carries out the reaction dimethylallyl diphosphate + 2 oxidized [2Fe-2S]-[ferredoxin] + H2O = (2E)-4-hydroxy-3-methylbut-2-enyl diphosphate + 2 reduced [2Fe-2S]-[ferredoxin] + 2 H(+). It participates in isoprenoid biosynthesis; dimethylallyl diphosphate biosynthesis; dimethylallyl diphosphate from (2E)-4-hydroxy-3-methylbutenyl diphosphate: step 1/1. It functions in the pathway isoprenoid biosynthesis; isopentenyl diphosphate biosynthesis via DXP pathway; isopentenyl diphosphate from 1-deoxy-D-xylulose 5-phosphate: step 6/6. Catalyzes the conversion of 1-hydroxy-2-methyl-2-(E)-butenyl 4-diphosphate (HMBPP) into a mixture of isopentenyl diphosphate (IPP) and dimethylallyl diphosphate (DMAPP). Acts in the terminal step of the DOXP/MEP pathway for isoprenoid precursor biosynthesis. The protein is 4-hydroxy-3-methylbut-2-enyl diphosphate reductase of Nitratidesulfovibrio vulgaris (strain DSM 19637 / Miyazaki F) (Desulfovibrio vulgaris).